The following is a 469-amino-acid chain: Argininosuccinate lyase (469 aa).

This sequence belongs to the lyase 1 family. Argininosuccinate lyase subfamily.

The protein localises to the cytoplasm. It carries out the reaction 2-(N(omega)-L-arginino)succinate = fumarate + L-arginine. It functions in the pathway amino-acid biosynthesis; L-arginine biosynthesis; L-arginine from L-ornithine and carbamoyl phosphate: step 3/3. This Burkholderia cenocepacia (strain HI2424) protein is Argininosuccinate lyase.